A 454-amino-acid polypeptide reads, in one-letter code: Chromosomal replication initiator protein DnaA (454 aa).

A domain I, interacts with DnaA modulators region spans residues 1–77; that stretch reads MASLNENQKF…GFEVFGRMID (77 aa). The domain II stretch occupies residues 77–115; the sequence is DYELYANDELTDIELRRLNNQSPVDEPLSVAKPTSPLVS. The interval 116 to 332 is domain III, AAA+ region; it reads GLNEKYNFEN…GALNRVEFVA (217 aa). 4 residues coordinate ATP: Gly-160, Gly-162, Lys-163, and Thr-164. Residues 333-454 are domain IV, binds dsDNA; the sequence is RANGISIVDI…KDIDSIKRKF (122 aa).

This sequence belongs to the DnaA family. As to quaternary structure, oligomerizes as a right-handed, spiral filament on DNA at oriC.

The protein resides in the cytoplasm. Its function is as follows. Plays an essential role in the initiation and regulation of chromosomal replication. ATP-DnaA binds to the origin of replication (oriC) to initiate formation of the DNA replication initiation complex once per cell cycle. Binds the DnaA box (a 9 base pair repeat at the origin) and separates the double-stranded (ds)DNA. Forms a right-handed helical filament on oriC DNA; dsDNA binds to the exterior of the filament while single-stranded (ss)DNA is stabiized in the filament's interior. The ATP-DnaA-oriC complex binds and stabilizes one strand of the AT-rich DNA unwinding element (DUE), permitting loading of DNA polymerase. After initiation quickly degrades to an ADP-DnaA complex that is not apt for DNA replication. Binds acidic phospholipids. This chain is Chromosomal replication initiator protein DnaA, found in Lactococcus lactis subsp. cremoris (strain MG1363).